We begin with the raw amino-acid sequence, 442 residues long: Proline--tRNA ligase (442 aa).

This sequence belongs to the class-II aminoacyl-tRNA synthetase family. ProS type 2 subfamily. Homodimer.

The protein resides in the cytoplasm. The enzyme catalyses tRNA(Pro) + L-proline + ATP = L-prolyl-tRNA(Pro) + AMP + diphosphate. Functionally, catalyzes the attachment of proline to tRNA(Pro) in a two-step reaction: proline is first activated by ATP to form Pro-AMP and then transferred to the acceptor end of tRNA(Pro). In Sinorhizobium medicae (strain WSM419) (Ensifer medicae), this protein is Proline--tRNA ligase.